A 269-amino-acid polypeptide reads, in one-letter code: NAD kinase (269 aa).

Catalysis depends on Asp-45, which acts as the Proton acceptor. Residues Asp-45–Gly-46, Asn-122–Glu-123, Arg-149, Asp-151, and Ala-186 each bind NAD(+).

This sequence belongs to the NAD kinase family. A divalent metal cation is required as a cofactor.

Its subcellular location is the cytoplasm. It catalyses the reaction NAD(+) + ATP = ADP + NADP(+) + H(+). Its function is as follows. Involved in the regulation of the intracellular balance of NAD and NADP, and is a key enzyme in the biosynthesis of NADP. Catalyzes specifically the phosphorylation on 2'-hydroxyl of the adenosine moiety of NAD to yield NADP. In Staphylococcus carnosus (strain TM300), this protein is NAD kinase.